We begin with the raw amino-acid sequence, 773 residues long: Jhy protein homolog (773 aa).

5 disordered regions span residues Met-1–Tyr-247, Trp-325–Val-373, Lys-496–Leu-526, Glu-596–Arg-615, and Ala-713–Thr-743. Polar residues predominate over residues Val-10 to Pro-28. The span at Ser-29–Leu-43 shows a compositional bias: basic and acidic residues. Polar residues predominate over residues Glu-48–Gln-57. The segment covering Asp-59 to Glu-84 has biased composition (acidic residues). The segment covering Pro-112–Lys-134 has biased composition (basic and acidic residues). Positions Val-145–Leu-154 are enriched in polar residues. Residues Ser-216 to Ser-229 are compositionally biased toward low complexity. A compositionally biased stretch (polar residues) spans Ser-334–Ser-351. Over residues Lys-353–Pro-369 the composition is skewed to basic residues. The segment covering Ser-500–Ala-516 has biased composition (polar residues). The span at Glu-598–Gln-610 shows a compositional bias: low complexity. The segment covering Ala-728–Thr-743 has biased composition (basic and acidic residues).

Its function is as follows. Required for the normal development of cilia in brain ependymal cells lining the ventricular surfaces. In Bos taurus (Bovine), this protein is Jhy protein homolog (JHY).